The sequence spans 461 residues: Dihydrofolate reductase (461 aa).

The DHFR domain occupies 233–447; the sequence is DLTMIVAVSS…VEIEFELYGK (215 aa). Residues Ala-239 and 246 to 252 contribute to the NADP(+) site; that span reads GIGKKNS. 260 to 265 contributes to the substrate binding site; it reads EMAYFA. 292–294 contributes to the NADP(+) binding site; it reads RSC. Arg-308 is a substrate binding site. NADP(+) contacts are provided by residues 314 to 316 and 365 to 372; these read TRN and GGSFLYGS.

The protein belongs to the dihydrofolate reductase family.

It catalyses the reaction (6S)-5,6,7,8-tetrahydrofolate + NADP(+) = 7,8-dihydrofolate + NADPH + H(+). Its pathway is cofactor biosynthesis; tetrahydrofolate biosynthesis; 5,6,7,8-tetrahydrofolate from 7,8-dihydrofolate: step 1/1. Its function is as follows. Key enzyme in folate metabolism. Catalyzes an essential reaction for de novo glycine and purine synthesis, and for DNA precursor synthesis. This chain is Dihydrofolate reductase (dfr1), found in Schizosaccharomyces pombe (strain 972 / ATCC 24843) (Fission yeast).